The chain runs to 300 residues: Bidirectional sugar transporter SWEET12 (300 aa).

The Extracellular segment spans residues 1–4; sequence MVQA. Residues 5–25 form a helical membrane-spanning segment; sequence LVFAVGIVGNILSFLVILAPV. The region spanning 8-92 is the MtN3/slv 1 domain; that stretch reads AVGIVGNILS…TVYLLYAPRQ (85 aa). Topologically, residues 26-38 are cytoplasmic; sequence PTFYRVYKKKSTE. The helical transmembrane segment at 39 to 61 threads the bilayer; it reads SFQSVPYAVALLSAMLWLYYALL. Residues 62-67 are Extracellular-facing; it reads TSDLLL. A helical transmembrane segment spans residues 68–88; that stretch reads LSINSIGCLVESLYLTVYLLY. At 89 to 99 the chain is on the cytoplasmic side; the sequence is APRQAMAFTLK. Residues 100 to 120 form a helical membrane-spanning segment; that stretch reads LVCAMNLALFAAVVAALQLLV. The Extracellular segment spans residues 121–128; the sequence is KATDRRVT. The helical transmembrane segment at 129-149 threads the bilayer; the sequence is LAGGIGASFALAVFVAPLTII. One can recognise a MtN3/slv 2 domain in the interval 131–213; that stretch reads GGIGASFALA…VLYVVYKNPK (83 aa). The Cytoplasmic portion of the chain corresponds to 150-162; the sequence is RQVIRTKSVEFMP. Residues 163-183 form a helical membrane-spanning segment; the sequence is FWLSFFLTLSAVVWFFYGLLM. Residues 184-185 lie on the Extracellular side of the membrane; it reads KD. Residues 186-206 form a helical membrane-spanning segment; that stretch reads FFVATPNVLGLLFGLAQMVLY. Residues 207–300 are Cytoplasmic-facing; the sequence is VVYKNPKKNS…PPALPAVEVA (94 aa). A disordered region spans residues 256–300; it reads ADLEAAAPATPQRPADDDAIDHRSVVVDIPPPPQPPPALPAVEVA. Residues 269–280 show a composition bias toward basic and acidic residues; it reads PADDDAIDHRSV. A compositionally biased stretch (pro residues) spans 284 to 294; that stretch reads IPPPPQPPPAL.

Belongs to the SWEET sugar transporter family. In terms of assembly, forms homooligomers and/or heterooligomers.

It localises to the cell membrane. Its function is as follows. Mediates both low-affinity uptake and efflux of sugar across the plasma membrane. Functionally, confers blight susceptibility. Confers TAL effector-mediated susceptibility to Xanthomonas oryzae pv. oryzae. In Oryza sativa subsp. japonica (Rice), this protein is Bidirectional sugar transporter SWEET12 (SWEET12).